The chain runs to 102 residues: Small ribosomal subunit protein uS10 (102 aa).

Belongs to the universal ribosomal protein uS10 family. As to quaternary structure, part of the 30S ribosomal subunit.

Functionally, involved in the binding of tRNA to the ribosomes. In Tropheryma whipplei (strain TW08/27) (Whipple's bacillus), this protein is Small ribosomal subunit protein uS10.